A 490-amino-acid chain; its full sequence is Katanin p60 ATPase-containing subunit A-like 1 (490 aa).

The residue at position 1 (Met-1) is an N-acetylmethionine. A disordered region spans residues 95-184; sequence DPAVWPPPVP…DGEMPKFDGA (90 aa). The span at 116-127 shows a compositional bias: basic and acidic residues; it reads PNREVRPLRKEM. Positions 128–139 are enriched in low complexity; it reads AGVGARGPVGRA. The segment covering 143–169 has biased composition (basic and acidic residues); that stretch reads SKSEKPSTSRDKDYRARGRDDKGRKNM. Ser-174 is modified (phosphoserine). 248 to 255 is a binding site for ATP; the sequence is GPPGTGKT.

This sequence belongs to the AAA ATPase family. Katanin p60 subunit A1 subfamily. A-like 1 sub-subfamily. As to quaternary structure, interacts with KATNB1 and KATNBL1. As to expression, expressed in testis, restricted to Sertoli cells (at protein level).

The protein localises to the cytoplasm. The protein resides in the cytoskeleton. It is found in the spindle pole. Its subcellular location is the spindle. The catalysed reaction is n ATP + n H2O + a microtubule = n ADP + n phosphate + (n+1) alpha/beta tubulin heterodimers.. Regulates microtubule dynamics in Sertoli cells, a process that is essential for spermiogenesis and male fertility. Severs microtubules in an ATP-dependent manner, promoting rapid reorganization of cellular microtubule arrays. Has microtubule-severing activity in vitro. The polypeptide is Katanin p60 ATPase-containing subunit A-like 1 (Homo sapiens (Human)).